Consider the following 256-residue polypeptide: Non-specific lipid transfer protein GPI-anchored 23 (256 aa).

The first 21 residues, 1-21 (MKPSFVLLSIVLLLSSSLSDA), serve as a signal peptide directing secretion. A glycan (N-linked (GlcNAc...) asparagine) is linked at asparagine 41. Cystine bridges form between cysteine 45–cysteine 88, cysteine 55–cysteine 72, cysteine 73–cysteine 113, and cysteine 86–cysteine 121. Residues 125–230 (TPAASTPVSP…SPSPSPSPSI (106 aa)) are disordered. The span at 138-230 (SPTTSPSSAK…SPSPSPSPSI (93 aa)) shows a compositional bias: low complexity. Serine 225 carries GPI-anchor amidated serine lipidation. The propeptide at 226-256 (PSPSISSSGILLVSKLFIAVVMVSSFLYILA) is removed in mature form.

Belongs to the plant LTP family. As to expression, confined to the anthers of the inflorescence.

It is found in the cell membrane. Its function is as follows. Probable lipid transfer protein. This Arabidopsis thaliana (Mouse-ear cress) protein is Non-specific lipid transfer protein GPI-anchored 23.